We begin with the raw amino-acid sequence, 306 residues long: Porphobilinogen deaminase (306 aa).

At C241 the chain carries S-(dipyrrolylmethanemethyl)cysteine.

The protein belongs to the HMBS family. As to quaternary structure, monomer. Requires dipyrromethane as cofactor.

The catalysed reaction is 4 porphobilinogen + H2O = hydroxymethylbilane + 4 NH4(+). It functions in the pathway porphyrin-containing compound metabolism; protoporphyrin-IX biosynthesis; coproporphyrinogen-III from 5-aminolevulinate: step 2/4. In terms of biological role, tetrapolymerization of the monopyrrole PBG into the hydroxymethylbilane pre-uroporphyrinogen in several discrete steps. In Acidithiobacillus ferrooxidans (strain ATCC 23270 / DSM 14882 / CIP 104768 / NCIMB 8455) (Ferrobacillus ferrooxidans (strain ATCC 23270)), this protein is Porphobilinogen deaminase.